The chain runs to 622 residues: Probable potassium transport system protein Kup (622 aa).

A run of 12 helical transmembrane segments spans residues leucine 8–leucine 28, isoleucine 50–valine 70, leucine 103–isoleucine 123, proline 137–valine 157, phenylalanine 168–isoleucine 188, alanine 203–leucine 223, tryptophan 247–leucine 267, alanine 285–isoleucine 305, isoleucine 337–phenylalanine 357, alanine 366–isoleucine 386, proline 393–alanine 413, and leucine 419–threonine 439.

This sequence belongs to the HAK/KUP transporter (TC 2.A.72) family.

It localises to the cell inner membrane. The catalysed reaction is K(+)(in) + H(+)(in) = K(+)(out) + H(+)(out). In terms of biological role, transport of potassium into the cell. Likely operates as a K(+):H(+) symporter. The sequence is that of Probable potassium transport system protein Kup from Verminephrobacter eiseniae (strain EF01-2).